A 169-amino-acid polypeptide reads, in one-letter code: Der GTPase-activating protein YihI (169 aa).

Disordered regions lie at residues 1 to 99 (MKPS…QAEL) and 146 to 169 (SYDDDEEEEEDEKQEDMMRLLRGN). A compositionally biased stretch (basic residues) spans 10–19 (SKGHAKARRK). Positions 20–30 (TREELDQEARD) are enriched in basic and acidic residues. A compositionally biased stretch (basic residues) spans 31-40 (RKRQKKRRGH). Over residues 49-58 (GNTTSGSKGQ) the composition is skewed to polar residues. The span at 147 to 159 (YDDDEEEEEDEKQ) shows a compositional bias: acidic residues. Residues 160–169 (EDMMRLLRGN) are compositionally biased toward basic and acidic residues.

The protein belongs to the YihI family. In terms of assembly, interacts with Der.

Its function is as follows. A GTPase-activating protein (GAP) that modifies Der/EngA GTPase function. May play a role in ribosome biogenesis. The polypeptide is Der GTPase-activating protein YihI (Escherichia coli O81 (strain ED1a)).